The chain runs to 817 residues: Ribonuclease R 1 (817 aa).

An RNB domain is found at 259–584; that stretch reads RVDYRNEITF…DLLVHRLIRE (326 aa). The S1 motif domain maps to 637–717; sequence GEEYEGIIAS…MTGEIDFEYL (81 aa). The tract at residues 728–817 is disordered; it reads AKAKKKPDHK…DGRKKPHKRG (90 aa). The span at 729–742 shows a compositional bias: basic residues; that stretch reads KAKKKPDHKGRKKS. Composition is skewed to basic and acidic residues over residues 767–777 and 795–810; these read RRADEKFEFDK and KFTD…TDGR.

It belongs to the RNR ribonuclease family. RNase R subfamily.

It is found in the cytoplasm. It catalyses the reaction Exonucleolytic cleavage in the 3'- to 5'-direction to yield nucleoside 5'-phosphates.. Functionally, 3'-5' exoribonuclease that releases 5'-nucleoside monophosphates and is involved in maturation of structured RNAs. The chain is Ribonuclease R 1 (rnr1) from Lactococcus lactis subsp. lactis (strain IL1403) (Streptococcus lactis).